The following is a 463-amino-acid chain: Exodeoxyribonuclease 7 large subunit (463 aa).

It belongs to the XseA family. In terms of assembly, heterooligomer composed of large and small subunits.

It is found in the cytoplasm. It catalyses the reaction Exonucleolytic cleavage in either 5'- to 3'- or 3'- to 5'-direction to yield nucleoside 5'-phosphates.. Bidirectionally degrades single-stranded DNA into large acid-insoluble oligonucleotides, which are then degraded further into small acid-soluble oligonucleotides. This chain is Exodeoxyribonuclease 7 large subunit, found in Bordetella pertussis (strain Tohama I / ATCC BAA-589 / NCTC 13251).